The primary structure comprises 51 residues: Mitochondrial import receptor subunit TOM5 homolog (51 aa).

M1 carries the N-acetylmethionine modification. K10 participates in a covalent cross-link: Glycyl lysine isopeptide (Lys-Gly) (interchain with G-Cter in SUMO2). Residues 27–45 (SIRNFLIYVALLRVTPYIL) form a helical membrane-spanning segment.

This sequence belongs to the Tom5 family. Forms part of the preprotein translocase complex of the outer mitochondrial membrane (TOM complex) which consists of at least 7 different proteins (TOMM5, TOMM6, TOMM7, TOMM20, TOMM22, TOMM40 and TOMM70).

The protein resides in the mitochondrion outer membrane. This chain is Mitochondrial import receptor subunit TOM5 homolog, found in Mus musculus (Mouse).